The following is a 161-amino-acid chain: 6,7-dimethyl-8-ribityllumazine synthase (161 aa).

5-amino-6-(D-ribitylamino)uracil-binding positions include tryptophan 26, 58 to 60 (SFE), and 81 to 83 (VVI). (2S)-2-hydroxy-3-oxobutyl phosphate is bound at residue 86 to 87 (GT). Histidine 89 acts as the Proton donor in catalysis. A 5-amino-6-(D-ribitylamino)uracil-binding site is contributed by phenylalanine 114. Arginine 128 is a binding site for (2S)-2-hydroxy-3-oxobutyl phosphate.

Belongs to the DMRL synthase family.

It carries out the reaction (2S)-2-hydroxy-3-oxobutyl phosphate + 5-amino-6-(D-ribitylamino)uracil = 6,7-dimethyl-8-(1-D-ribityl)lumazine + phosphate + 2 H2O + H(+). Its pathway is cofactor biosynthesis; riboflavin biosynthesis; riboflavin from 2-hydroxy-3-oxobutyl phosphate and 5-amino-6-(D-ribitylamino)uracil: step 1/2. In terms of biological role, catalyzes the formation of 6,7-dimethyl-8-ribityllumazine by condensation of 5-amino-6-(D-ribitylamino)uracil with 3,4-dihydroxy-2-butanone 4-phosphate. This is the penultimate step in the biosynthesis of riboflavin. The sequence is that of 6,7-dimethyl-8-ribityllumazine synthase from Streptomyces coelicolor (strain ATCC BAA-471 / A3(2) / M145).